The chain runs to 86 residues: Protein YwqI (86 aa).

Residues 57–83 (DYKKAVQKNIEDTKDNVDSLKEQDEAI) adopt a coiled-coil conformation.

The sequence is that of Protein YwqI (ywqI) from Bacillus subtilis (strain 168).